Here is a 265-residue protein sequence, read N- to C-terminus: Cytochrome b-c1 complex subunit Rieske, mitochondrial (265 aa).

The N-terminal 53 residues, 1-53 (MLRVAGRRLSSSAARSSSTFFTRSSFTVTDDSSPARSPSPSLTSSFLDQIRGF), are a transit peptide targeting the mitochondrion. At 54–102 (SSNSVSPAHQLGLVSDLPATVAAIKNPSSKIVYDDSNHERYPPGDPSKR) the chain is on the mitochondrial matrix side. Residues 103–125 (AFAYFVLTGGRFVYASSVRLLIL) form a helical membrane-spanning segment. Residues 126 to 265 (KFVLSMSASK…FLEENKLLIG (140 aa)) are Mitochondrial intermembrane-facing. The region spanning 175–263 (IKLANSVDLG…YSFLEENKLL (89 aa)) is the Rieske domain. Residues Cys208, His210, Cys227, and His230 each coordinate [2Fe-2S] cluster. A disulfide bridge connects residues Cys213 and Cys229.

It belongs to the Rieske iron-sulfur protein family. Component of the ubiquinol-cytochrome c oxidoreductase (cytochrome b-c1 complex, complex III, CIII), a multisubunit enzyme composed of 3 respiratory subunits cytochrome b, cytochrome c1 and Rieske protein, 2 core protein subunits, and several low-molecular weight protein subunits. The complex exists as an obligatory dimer and forms supercomplexes (SCs) in the inner mitochondrial membrane with cytochrome c oxidase (complex IV, CIV). [2Fe-2S] cluster serves as cofactor.

It is found in the mitochondrion inner membrane. It carries out the reaction a quinol + 2 Fe(III)-[cytochrome c](out) = a quinone + 2 Fe(II)-[cytochrome c](out) + 2 H(+)(out). In terms of biological role, component of the ubiquinol-cytochrome c oxidoreductase, a multisubunit transmembrane complex that is part of the mitochondrial electron transport chain which drives oxidative phosphorylation. The respiratory chain contains 3 multisubunit complexes succinate dehydrogenase (complex II, CII), ubiquinol-cytochrome c oxidoreductase (cytochrome b-c1 complex, complex III, CIII) and cytochrome c oxidase (complex IV, CIV), that cooperate to transfer electrons derived from NADH and succinate to molecular oxygen, creating an electrochemical gradient over the inner membrane that drives transmembrane transport and the ATP synthase. The cytochrome b-c1 complex catalyzes electron transfer from ubiquinol to cytochrome c, linking this redox reaction to translocation of protons across the mitochondrial inner membrane, with protons being carried across the membrane as hydrogens on the quinol. In the process called Q cycle, 2 protons are consumed from the matrix, 4 protons are released into the intermembrane space and 2 electrons are passed to cytochrome c. The Rieske protein is a catalytic core subunit containing a [2Fe-2S] iron-sulfur cluster. It cycles between 2 conformational states during catalysis to transfer electrons from the quinol bound in the Q(0) site in cytochrome b to cytochrome c1. This Solanum tuberosum (Potato) protein is Cytochrome b-c1 complex subunit Rieske, mitochondrial (FES1).